We begin with the raw amino-acid sequence, 507 residues long: Cytochrome P450 monooxygenase cloA (507 aa).

The helical transmembrane segment at tryptophan 15–isoleucine 35 threads the bilayer. N-linked (GlcNAc...) asparagine glycosylation occurs at asparagine 247. Heme is bound at residue cysteine 450.

Belongs to the cytochrome P450 family. The cofactor is heme.

The protein localises to the membrane. It functions in the pathway alkaloid biosynthesis; ergot alkaloid biosynthesis. Functionally, cytochrome P450 monooxygenase; part of the gene cluster that mediates the biosynthesis of fungal ergot alkaloid. DmaW catalyzes the first step of ergot alkaloid biosynthesis by condensing dimethylallyl diphosphate (DMAP) and tryptophan to form 4-dimethylallyl-L-tryptophan. The second step is catalyzed by the methyltransferase easF that methylates 4-dimethylallyl-L-tryptophan in the presence of S-adenosyl-L-methionine, resulting in the formation of 4-dimethylallyl-L-abrine. The catalase easC and the FAD-dependent oxidoreductase easE then transform 4-dimethylallyl-L-abrine to chanoclavine-I which is further oxidized by easD in the presence of NAD(+), resulting in the formation of chanoclavine-I aldehyde. Agroclavine dehydrogenase easG then mediates the conversion of chanoclavine-I aldehyde to agroclavine via a non-enzymatic adduct reaction: the substrate is an iminium intermediate that is formed spontaneously from chanoclavine-I aldehyde in the presence of glutathione. The presence of easA is not required to complete this reaction. Further conversion of agroclavine to paspalic acid is a two-step process involving oxidation of agroclavine to elymoclavine and of elymoclavine to paspalic acid, the second step being performed by the elymoclavine oxidase cloA. Paspalic acid is then further converted to D-lysergic acid. Ergopeptines are assembled from D-lysergic acid and three different amino acids by the D-lysergyl-peptide-synthetases composed each of a monomudular and a trimodular nonribosomal peptide synthetase subunit. LpsB and lpsC encode the monomodular subunits responsible for D-lysergic acid activation and incorporation into the ergopeptine backbone. LpsA1 and A2 subunits encode the trimodular nonribosomal peptide synthetase assembling the tripeptide portion of ergopeptines. LpsA1 is responsible for formation of the major ergopeptine, ergotamine, and lpsA2 for alpha-ergocryptine, the minor ergopeptine of the total alkaloid mixture elaborated by C.purpurea. D-lysergyl-tripeptides are assembled by the nonribosomal peptide synthetases and released as N-(D-lysergyl-aminoacyl)-lactams. Cyclolization of the D-lysergyl-tripeptides is performed by the Fe(2+)/2-ketoglutarate-dependent dioxygenase easH which introduces a hydroxyl group into N-(D-lysergyl-aminoacyl)-lactam at alpha-C of the aminoacyl residue followed by spontaneous condensation with the terminal lactam carbonyl group. The chain is Cytochrome P450 monooxygenase cloA from Claviceps purpurea (Ergot fungus).